The chain runs to 393 residues: Arginine biosynthesis bifunctional protein ArgJ (393 aa).

Residues Thr142, Lys168, Thr179, Glu265, Asn388, and Ser393 each coordinate substrate. Thr179 acts as the Nucleophile in catalysis.

The protein belongs to the ArgJ family. In terms of assembly, heterotetramer of two alpha and two beta chains.

It is found in the cytoplasm. The catalysed reaction is N(2)-acetyl-L-ornithine + L-glutamate = N-acetyl-L-glutamate + L-ornithine. It carries out the reaction L-glutamate + acetyl-CoA = N-acetyl-L-glutamate + CoA + H(+). Its pathway is amino-acid biosynthesis; L-arginine biosynthesis; L-ornithine and N-acetyl-L-glutamate from L-glutamate and N(2)-acetyl-L-ornithine (cyclic): step 1/1. It participates in amino-acid biosynthesis; L-arginine biosynthesis; N(2)-acetyl-L-ornithine from L-glutamate: step 1/4. Functionally, catalyzes two activities which are involved in the cyclic version of arginine biosynthesis: the synthesis of N-acetylglutamate from glutamate and acetyl-CoA as the acetyl donor, and of ornithine by transacetylation between N(2)-acetylornithine and glutamate. The chain is Arginine biosynthesis bifunctional protein ArgJ from Desulfotalea psychrophila (strain LSv54 / DSM 12343).